A 734-amino-acid polypeptide reads, in one-letter code: MTLRFPRFSQGLAQDPTTRRIWFGIATAHDFESHDDITEERLYQNIFASHFGQLAIIFLWTSGNLFHVAWQGNFESWIQDPLHVRPIAHAIWDPHFGQPAVEAFTRGGAIGPVNIAYSGVYQWWYTIGLRTNGDLYTGALFLLLLSAISLIASWLHLQPKWKPSVSWFKNAESRLNHHLSGLFGVSSLAWTGHLVHVAIPGSRGEYVRWNNFLEVLPYPQGLGPLFMGQWNLYAQNPDSSNHLFGTSQGAGTAILTLLGGFHPQTQSLWLTDIAHHHLAIAFLFLVAGHMYRTNFGIGHSIKDLLEAHIPPGGRLGRGHKGLYDTINNSLHFQLGLALASLGVITSLVAQHMYSLPAYAFIAQDFTTQAALYTHHQYIAGFIMTGAFAHGAIFFIRDYNPEQNEDNVLARMLDHKEAITSHLSWASLFLGFHTLGLYVHNDVMLAFGTPEKQILIEPIFAQWIQSAHGKTSYGFDVLLSSTNSPAFNAGRSIWLPGWLNAINENSNSLFLTIGPGDFLVHHAIALGLHTTTLILVKGALDARGSKLMPDKKDFGYSFPCDGPGRGGTCDISAWDAFYLAVFWMLNTIGWVTFYWHWKHITLWQGNVSQFNESSTYLMGWLRDYLWLNSSQLINGYNPFGMNSLSVWAWMFLFGHLVWATGFMFLISWRGYWQELIETLAWAHERTPLANLIRWKDKPVALSIVQARLVGLVHFSVGYIFTYAAFLIASTSGKFG.

The next 8 membrane-spanning stretches (helical) occupy residues 46-69 (IFASHFGQLAIIFLWTSGNLFHVA), 135-158 (LYTGALFLLLLSAISLIASWLHLQ), 175-199 (LNHHLSGLFGVSSLAWTGHLVHVAI), 273-291 (IAHHHLAIAFLFLVAGHMY), 330-353 (LHFQLGLALASLGVITSLVAQHMY), 369-395 (AALYTHHQYIAGFIMTGAFAHGAIFFI), 417-439 (AITSHLSWASLFLGFHTLGLYVH), and 517-535 (FLVHHAIALGLHTTTLILV). [4Fe-4S] cluster is bound by residues Cys559 and Cys568. The next 2 helical transmembrane spans lie at 575-596 (AFYLAVFWMLNTIGWVTFYWHW) and 643-665 (LSVWAWMFLFGHLVWATGFMFLI). 3 residues coordinate chlorophyll a: His654, Met662, and Tyr670. Residue Trp671 coordinates phylloquinone. Residues 707–727 (LVGLVHFSVGYIFTYAAFLIA) form a helical membrane-spanning segment.

The protein belongs to the PsaA/PsaB family. As to quaternary structure, the PsaA/B heterodimer binds the P700 chlorophyll special pair and subsequent electron acceptors. PSI consists of a core antenna complex that captures photons, and an electron transfer chain that converts photonic excitation into a charge separation. The eukaryotic PSI reaction center is composed of at least 11 subunits. It depends on P700 is a chlorophyll a/chlorophyll a' dimer, A0 is one or more chlorophyll a, A1 is one or both phylloquinones and FX is a shared 4Fe-4S iron-sulfur center. as a cofactor.

It localises to the plastid. The protein resides in the chloroplast thylakoid membrane. It catalyses the reaction reduced [plastocyanin] + hnu + oxidized [2Fe-2S]-[ferredoxin] = oxidized [plastocyanin] + reduced [2Fe-2S]-[ferredoxin]. Functionally, psaA and PsaB bind P700, the primary electron donor of photosystem I (PSI), as well as the electron acceptors A0, A1 and FX. PSI is a plastocyanin-ferredoxin oxidoreductase, converting photonic excitation into a charge separation, which transfers an electron from the donor P700 chlorophyll pair to the spectroscopically characterized acceptors A0, A1, FX, FA and FB in turn. Oxidized P700 is reduced on the lumenal side of the thylakoid membrane by plastocyanin. The polypeptide is Photosystem I P700 chlorophyll a apoprotein A2 (Phalaenopsis aphrodite subsp. formosana (Moth orchid)).